Consider the following 684-residue polypeptide: Methionine--tRNA ligase (684 aa).

The short motif at 14 to 24 (PYANGAIHLGH) is the 'HIGH' region element. Positions 145, 148, 158, and 161 each coordinate Zn(2+). Positions 330–334 (KMSKS) match the 'KMSKS' region motif. ATP is bound at residue K333. Residues 582–684 (DFAKLDLRVA…CGIRPGMQVK (103 aa)) enclose the tRNA-binding domain.

It belongs to the class-I aminoacyl-tRNA synthetase family. MetG type 1 subfamily. Homodimer. Requires Zn(2+) as cofactor.

It localises to the cytoplasm. It carries out the reaction tRNA(Met) + L-methionine + ATP = L-methionyl-tRNA(Met) + AMP + diphosphate. Functionally, is required not only for elongation of protein synthesis but also for the initiation of all mRNA translation through initiator tRNA(fMet) aminoacylation. This is Methionine--tRNA ligase from Haemophilus ducreyi (strain 35000HP / ATCC 700724).